The following is a 663-amino-acid chain: Putative glucosamine-6-phosphate deaminase-like protein BT_0258 (663 aa).

The interval 1 to 290 (MKTNLSSQIT…NLTRIQRPWL (290 aa)) is glucosamine-6-phosphate deaminase-like. Residue Glu184 is part of the active site.

This sequence in the N-terminal section; belongs to the glucosamine/galactosamine-6-phosphate isomerase family. NagB subfamily.

The sequence is that of Putative glucosamine-6-phosphate deaminase-like protein BT_0258 from Bacteroides thetaiotaomicron (strain ATCC 29148 / DSM 2079 / JCM 5827 / CCUG 10774 / NCTC 10582 / VPI-5482 / E50).